Consider the following 198-residue polypeptide: Cytochrome c oxidase assembly protein CtaG (198 aa).

The Cytoplasmic segment spans residues 1–12 (MADTGQSDRKER). A helical; Signal-anchor for type II membrane protein membrane pass occupies residues 13 to 35 (SNGVIVGTCLAFVVGMVGMAYAA). Topologically, residues 36–198 (VPLYDMFCRV…QVKSRTENKL (163 aa)) are periplasmic.

This sequence belongs to the COX11/CtaG family.

It is found in the cell inner membrane. Exerts its effect at some terminal stage of cytochrome c oxidase synthesis, probably by being involved in the insertion of the copper B into subunit I. In Sinorhizobium medicae (strain WSM419) (Ensifer medicae), this protein is Cytochrome c oxidase assembly protein CtaG.